A 148-amino-acid polypeptide reads, in one-letter code: Antitoxin Xre (148 aa).

It belongs to the MbcA/ParS/Xre antitoxin family. As to quaternary structure, homodimer. Forms a complex with cognate toxin Rse.

In terms of biological role, antitoxin component of a type II toxin-antitoxin (TA) system. Neutralizes the activity of cognate toxin Res. The protein is Antitoxin Xre of Yersinia enterocolitica serotype O:8 / biotype 1B (strain NCTC 13174 / 8081).